We begin with the raw amino-acid sequence, 185 residues long: 4-nitrophenol 4-monooxygenase/4-nitrocatechol 2-monooxygenase, reductase component (185 aa).

This sequence belongs to the non-flavoprotein flavin reductase family. In terms of assembly, the 4-NP/4-NCA monooxygenase is composed of an oxygenase component NpcA and a reductase component NpcB.

It catalyses the reaction 4-nitrophenol + NADH + O2 + H(+) = 4-nitrocatechol + NAD(+) + H2O. The enzyme catalyses 4-nitrocatechol + NADPH + O2 = 2-hydroxy-1,4-benzoquinone + nitrite + NADP(+) + H2O. The catalysed reaction is 4-nitrocatechol + NADH + O2 = 2-hydroxy-1,4-benzoquinone + nitrite + NAD(+) + H2O. Its pathway is aromatic compound metabolism. It participates in xenobiotic degradation. With respect to regulation, inhibited by methimazole. Involved in the degradation of para-nitrophenol (4-NP). Catalyzes both the initial hydroxylation of 4-NP to produce 4-nitrocatechol (4-NCA) and the subsequent oxidative release of the nitro group from 4-NCA to produce 2-hydroxy-1,4-benzoquinone. It can also use 4-nitroresorcinol as substrate with a rate of nitrite release similar to that observed with the two physiological substrates, 4-PN and 4-NCA. This chain is 4-nitrophenol 4-monooxygenase/4-nitrocatechol 2-monooxygenase, reductase component (npcB), found in Rhodococcus opacus (Nocardia opaca).